Here is a 127-residue protein sequence, read N- to C-terminus: Holo-[acyl-carrier-protein] synthase (127 aa).

Aspartate 9 and glutamate 58 together coordinate Mg(2+).

Belongs to the P-Pant transferase superfamily. AcpS family. The cofactor is Mg(2+).

The protein resides in the cytoplasm. The catalysed reaction is apo-[ACP] + CoA = holo-[ACP] + adenosine 3',5'-bisphosphate + H(+). Transfers the 4'-phosphopantetheine moiety from coenzyme A to a Ser of acyl-carrier-protein. The polypeptide is Holo-[acyl-carrier-protein] synthase (Shewanella baltica (strain OS155 / ATCC BAA-1091)).